A 288-amino-acid chain; its full sequence is Bifunctional protein FolD (288 aa).

NADP(+)-binding positions include 166 to 168 and isoleucine 232; that span reads GAS.

Belongs to the tetrahydrofolate dehydrogenase/cyclohydrolase family. Homodimer.

It carries out the reaction (6R)-5,10-methylene-5,6,7,8-tetrahydrofolate + NADP(+) = (6R)-5,10-methenyltetrahydrofolate + NADPH. It catalyses the reaction (6R)-5,10-methenyltetrahydrofolate + H2O = (6R)-10-formyltetrahydrofolate + H(+). Its pathway is one-carbon metabolism; tetrahydrofolate interconversion. Its function is as follows. Catalyzes the oxidation of 5,10-methylenetetrahydrofolate to 5,10-methenyltetrahydrofolate and then the hydrolysis of 5,10-methenyltetrahydrofolate to 10-formyltetrahydrofolate. The chain is Bifunctional protein FolD from Citrobacter koseri (strain ATCC BAA-895 / CDC 4225-83 / SGSC4696).